A 140-amino-acid polypeptide reads, in one-letter code: Putative pre-16S rRNA nuclease (140 aa).

Belongs to the YqgF nuclease family.

The protein localises to the cytoplasm. Could be a nuclease involved in processing of the 5'-end of pre-16S rRNA. The sequence is that of Putative pre-16S rRNA nuclease from Moorella thermoacetica (strain ATCC 39073 / JCM 9320).